Here is a 1164-residue protein sequence, read N- to C-terminus: DNA-directed RNA polymerase subunit beta' (1164 aa).

Zn(2+) contacts are provided by Cys-60, Cys-62, Cys-75, and Cys-78. Residues Asp-449, Asp-451, and Asp-453 each contribute to the Mg(2+) site. Residues Cys-776, Cys-850, Cys-857, and Cys-860 each contribute to the Zn(2+) site.

Belongs to the RNA polymerase beta' chain family. As to quaternary structure, the RNAP catalytic core consists of 2 alpha, 1 beta, 1 beta' and 1 omega subunit. When a sigma factor is associated with the core the holoenzyme is formed, which can initiate transcription. Mg(2+) serves as cofactor. It depends on Zn(2+) as a cofactor.

It carries out the reaction RNA(n) + a ribonucleoside 5'-triphosphate = RNA(n+1) + diphosphate. Functionally, DNA-dependent RNA polymerase catalyzes the transcription of DNA into RNA using the four ribonucleoside triphosphates as substrates. This is DNA-directed RNA polymerase subunit beta' from Moorella thermoacetica (strain ATCC 39073 / JCM 9320).